The chain runs to 742 residues: Protein CdcH (742 aa).

Residues 230–237 (GPPGTGKT) and 503–510 (GPPGTGKT) contribute to the ATP site. The interval 722–742 (FKGSQGPNVNSRQGSEHIGFQ) is disordered. The span at 723–734 (KGSQGPNVNSRQ) shows a compositional bias: polar residues.

This sequence belongs to the AAA ATPase family. CDC48 subfamily.

May be part of a transduction pathway connecting light to cell division. The chain is Protein CdcH (cdcH) from Halobacterium salinarum (strain ATCC 700922 / JCM 11081 / NRC-1) (Halobacterium halobium).